A 213-amino-acid polypeptide reads, in one-letter code: High frequency lysogenization protein HflD homolog (213 aa).

This sequence belongs to the HflD family.

Its subcellular location is the cytoplasm. The protein localises to the cell inner membrane. This Alcanivorax borkumensis (strain ATCC 700651 / DSM 11573 / NCIMB 13689 / SK2) protein is High frequency lysogenization protein HflD homolog.